Here is a 186-residue protein sequence, read N- to C-terminus: Peptidyl-tRNA hydrolase (186 aa).

Position 14 (Tyr-14) interacts with tRNA. The active-site Proton acceptor is the His-19. Residues Tyr-64, Asn-66, and Asn-112 each contribute to the tRNA site.

It belongs to the PTH family. In terms of assembly, monomer.

It localises to the cytoplasm. It catalyses the reaction an N-acyl-L-alpha-aminoacyl-tRNA + H2O = an N-acyl-L-amino acid + a tRNA + H(+). Hydrolyzes ribosome-free peptidyl-tRNAs (with 1 or more amino acids incorporated), which drop off the ribosome during protein synthesis, or as a result of ribosome stalling. In terms of biological role, catalyzes the release of premature peptidyl moieties from peptidyl-tRNA molecules trapped in stalled 50S ribosomal subunits, and thus maintains levels of free tRNAs and 50S ribosomes. The polypeptide is Peptidyl-tRNA hydrolase (Bacillus cytotoxicus (strain DSM 22905 / CIP 110041 / 391-98 / NVH 391-98)).